Consider the following 497-residue polypeptide: COP9 signalosome complex subunit 6 (497 aa).

The MPN domain maps to 21-162 (VALHPLPILE…LTIYESNLEI (142 aa)). Disordered stretches follow at residues 230–282 (ATED…KNRD), 324–350 (YLSS…LDQP), and 435–497 (AKNS…RFDH). Basic and acidic residues predominate over residues 236-246 (SDKPLMKKVVD). Composition is skewed to low complexity over residues 258–272 (SDDA…SSAA) and 333–343 (QQQQQQQQQQQ). Over residues 440-453 (RREQASHGGGERFN) the composition is skewed to basic and acidic residues. The segment covering 475 to 488 (VGEGSASGSGGSGP) has biased composition (gly residues).

It belongs to the peptidase M67A family. CSN6 subfamily. In terms of assembly, component of the COP9 signalosome (CSN) complex.

Its subcellular location is the cytoplasm. The protein resides in the nucleus. Its function is as follows. Component of the COP9 signalosome (CSN) complex that acts as an regulator of the ubiquitin (Ubl) conjugation pathway by mediating the deneddylation of the cullin subunit of SCF-type E3 ubiquitin-protein ligase complexes. The CSN complex is involved in the regulation of the circadian clock through its control of the stability of the SCF(FWD1) complex. This is COP9 signalosome complex subunit 6 (csn-6) from Neurospora crassa (strain ATCC 24698 / 74-OR23-1A / CBS 708.71 / DSM 1257 / FGSC 987).